Consider the following 239-residue polypeptide: Large ribosomal subunit protein uL2 (239 aa).

Disordered regions lie at residues 1-20 (MGHRIKTQNRGRGGPTYRAP) and 202-239 (FGGGGHQHTGRPKTVSRGTSPGRKVGSVAARRTGRRKR).

This sequence belongs to the universal ribosomal protein uL2 family. As to quaternary structure, part of the 50S ribosomal subunit. Forms a bridge to the 30S subunit in the 70S ribosome.

Functionally, one of the primary rRNA binding proteins. Required for association of the 30S and 50S subunits to form the 70S ribosome, for tRNA binding and peptide bond formation. It has been suggested to have peptidyltransferase activity; this is somewhat controversial. Makes several contacts with the 16S rRNA in the 70S ribosome. This chain is Large ribosomal subunit protein uL2, found in Methanosphaerula palustris (strain ATCC BAA-1556 / DSM 19958 / E1-9c).